Consider the following 145-residue polypeptide: MTNWINTVSRDHVERGVRGRFTQANHGKPHMLRKMSRGDWIVFYSPKTAYPDGEPLQAFTAIGQVADDEPYQVEVAPDFQPWRRNVDFLDCAETPIRPLLDDLEFIEDKARWGYKFRFGVFRIDDHDLEVIRSAMVTPTAHIAGT.

It belongs to the UPF0310 family.

The polypeptide is UPF0310 protein Mvan_0064 (Mycolicibacterium vanbaalenii (strain DSM 7251 / JCM 13017 / BCRC 16820 / KCTC 9966 / NRRL B-24157 / PYR-1) (Mycobacterium vanbaalenii)).